The primary structure comprises 553 residues: Aminotransferase FUM8 (553 aa).

A signal peptide spans 1-25 (MSPAPAILALRRVYNFCLLVDEAHG). N-linked (GlcNAc...) asparagine glycosylation occurs at asparagine 480.

Belongs to the class-II pyridoxal-phosphate-dependent aminotransferase family. BioF subfamily. Requires pyridoxal 5'-phosphate as cofactor.

It localises to the endoplasmic reticulum. It functions in the pathway mycotoxin biosynthesis. Aminotransferase; part of the gene cluster that mediates the biosynthesis of fumonisins B1 (FB1), B2 (FB2), B3 (FB3), and B4 (FB4), which are carcinogenic mycotoxins. Within the pathway, FUM8 catalyzes the release of the C-18 polyketide chain from the highly reducing polyketide synthase FUM1 by a nucleophilic attack of a carbanion, which is derived from R-carbon of alanine by decarboxylation, on the carbonyl carbon of polyketide acyl chain. The biosynthesis starts with the FUM1-catalyzed carbon chain assembly from one molecule of acetyl-CoA, eight molecules of malonyl-CoA, and two molecules of methionine (in S-adenosyl form). The C18 polyketide chain is released from the enzyme by a nucleophilic attack of a carbanion, which is derived from R-carbon of alanine by decarboxylation, on the carbonyl carbon of polyketide acyl chain. This step is catalyzed by the pyridoxal 5'-phosphate-dependent aminoacyl transferase FUM8. The resultant 3-keto intermediate is then stereospecifically reduced to a 3-hydroxyl product by reductase FUM13. Subsequent oxidations at C-10 by the cytochrome P450 monooxygenase FUM2, C-14 and C-15 by FUM6, FUM12 or FUM15, tricarballylic esterification of the hydroxyl groups on C-14 and C-15 by acyltransferase FUM14, and C-5 hydroxylation by 2-keto-glutarate-dependent dioxygenase FUM3 furnish the biosynthesis of fumonisins. The tricarballylic moieties are most likely derived from the citric acid cycle, and their addition to the carbon backbone may involve FUM7, FUM10, FUM11 and FUM14. This chain is Aminotransferase FUM8, found in Gibberella moniliformis (strain M3125 / FGSC 7600) (Maize ear and stalk rot fungus).